A 354-amino-acid chain; its full sequence is GTPase Obg (354 aa).

The region spanning 1 to 159 (MQFIDHAEIE…KQLRLELKLL (159 aa)) is the Obg domain. An OBG-type G domain is found at 160-328 (AEVGIIGLPN…LLQEIWDVLD (169 aa)). GTP contacts are provided by residues 166–173 (GLPNAGKS), 191–195 (FTTLI), 213–216 (DIPG), 280–283 (NKLD), and 309–311 (SAV). Residues Ser-173 and Thr-193 each contribute to the Mg(2+) site.

The protein belongs to the TRAFAC class OBG-HflX-like GTPase superfamily. OBG GTPase family. Monomer. Mg(2+) is required as a cofactor.

It localises to the cytoplasm. Its function is as follows. An essential GTPase which binds GTP, GDP and possibly (p)ppGpp with moderate affinity, with high nucleotide exchange rates and a fairly low GTP hydrolysis rate. Plays a role in control of the cell cycle, stress response, ribosome biogenesis and in those bacteria that undergo differentiation, in morphogenesis control. The polypeptide is GTPase Obg (Picosynechococcus sp. (strain ATCC 27264 / PCC 7002 / PR-6) (Agmenellum quadruplicatum)).